The primary structure comprises 412 residues: uncharacterized protein (412 aa).

11 helical membrane passes run 17-37 (LLLA…ELVI), 54-74 (VLAL…PLLV), 91-111 (MIFI…FFFL), 112-132 (GRAL…AVVG), 146-166 (LIVS…SFIG), 173-193 (WTFW…LLEM), 225-245 (VYIT…SFLG), 257-277 (TAAG…VITG), 299-319 (LLAC…SLFI), 346-366 (VMVF…ALMG), and 375-395 (AAVG…SVFA).

This sequence belongs to the major facilitator superfamily.

The protein localises to the cell membrane. This is an uncharacterized protein from Bacillus subtilis (strain 168).